Reading from the N-terminus, the 316-residue chain is Holliday junction branch migration complex subunit RuvB (316 aa).

The large ATPase domain (RuvB-L) stretch occupies residues 1–165 (MQITRPHNFE…FGYIARFVSY (165 aa)). ATP contacts are provided by residues R5, G46, K49, T50, S51, 112–114 (EDF), R155, Y165, and R202. Residue T50 coordinates Mg(2+). Positions 166–236 (NAEDMKQIIR…IIKKTFKSLD (71 aa)) are small ATPAse domain (RuvB-S). Residues 239–316 (EYGLTKDHVE…TYLLKEKLIW (78 aa)) are head domain (RuvB-H). The DNA site is built by K294 and R299.

It belongs to the RuvB family. In terms of assembly, homohexamer. Forms an RuvA(8)-RuvB(12)-Holliday junction (HJ) complex. HJ DNA is sandwiched between 2 RuvA tetramers; dsDNA enters through RuvA and exits via RuvB. An RuvB hexamer assembles on each DNA strand where it exits the tetramer. Each RuvB hexamer is contacted by two RuvA subunits (via domain III) on 2 adjacent RuvB subunits; this complex drives branch migration. In the full resolvosome a probable DNA-RuvA(4)-RuvB(12)-RuvC(2) complex forms which resolves the HJ.

The protein localises to the cytoplasm. The enzyme catalyses ATP + H2O = ADP + phosphate + H(+). Functionally, the RuvA-RuvB-RuvC complex processes Holliday junction (HJ) DNA during genetic recombination and DNA repair, while the RuvA-RuvB complex plays an important role in the rescue of blocked DNA replication forks via replication fork reversal (RFR). RuvA specifically binds to HJ cruciform DNA, conferring on it an open structure. The RuvB hexamer acts as an ATP-dependent pump, pulling dsDNA into and through the RuvAB complex. RuvB forms 2 homohexamers on either side of HJ DNA bound by 1 or 2 RuvA tetramers; 4 subunits per hexamer contact DNA at a time. Coordinated motions by a converter formed by DNA-disengaged RuvB subunits stimulates ATP hydrolysis and nucleotide exchange. Immobilization of the converter enables RuvB to convert the ATP-contained energy into a lever motion, pulling 2 nucleotides of DNA out of the RuvA tetramer per ATP hydrolyzed, thus driving DNA branch migration. The RuvB motors rotate together with the DNA substrate, which together with the progressing nucleotide cycle form the mechanistic basis for DNA recombination by continuous HJ branch migration. Branch migration allows RuvC to scan DNA until it finds its consensus sequence, where it cleaves and resolves cruciform DNA. This chain is Holliday junction branch migration complex subunit RuvB, found in Mycoplasmopsis synoviae (strain 53) (Mycoplasma synoviae).